The following is a 474-amino-acid chain: Probable fucosyltransferase 9 (474 aa).

The helical; Signal-anchor for type II membrane protein transmembrane segment at 1–21 threads the bilayer; that stretch reads MIKLTIAIATCLVLCLVLLLP. The Lumenal segment spans residues 22–474; the sequence is SSNISYRHKY…LKLVDVSDEL (453 aa). 3 N-linked (GlcNAc...) asparagine glycosylation sites follow: N24, N39, and N208.

This sequence belongs to the glycosyltransferase 37 family. In terms of tissue distribution, expressed in leaves and stems.

The protein localises to the golgi apparatus. Its subcellular location is the golgi stack membrane. It participates in protein modification; protein glycosylation. In terms of biological role, may be involved in cell wall biosynthesis. May act as a fucosyltransferase. The protein is Probable fucosyltransferase 9 (FUT9) of Arabidopsis thaliana (Mouse-ear cress).